The following is a 125-amino-acid chain: DNA-directed RNA polymerases I and III subunit RPAC2 (125 aa).

Belongs to the archaeal Rpo11/eukaryotic RPB11/RPC19 RNA polymerase subunit family. As to quaternary structure, component of the RNA polymerase I (Pol I) and RNA polymerase III (Pol III) complexes consisting of 14 and 17 subunits, respectively.

The protein resides in the nucleus. Its function is as follows. DNA-dependent RNA polymerase catalyzes the transcription of DNA into RNA using the four ribonucleoside triphosphates as substrates. Common core component of RNA polymerases I and III which synthesize ribosomal RNA precursors and small RNAs, such as 5S rRNA and tRNAs, respectively. This Schizosaccharomyces pombe (strain 972 / ATCC 24843) (Fission yeast) protein is DNA-directed RNA polymerases I and III subunit RPAC2 (rpc19).